Here is a 711-residue protein sequence, read N- to C-terminus: Ribosomal RNA large subunit methyltransferase K/L (711 aa).

Residues 42–153 (DAQRAVLWSR…KGRATISVDL (112 aa)) enclose the THUMP domain.

The protein belongs to the methyltransferase superfamily. RlmKL family.

Its subcellular location is the cytoplasm. It carries out the reaction guanosine(2445) in 23S rRNA + S-adenosyl-L-methionine = N(2)-methylguanosine(2445) in 23S rRNA + S-adenosyl-L-homocysteine + H(+). It catalyses the reaction guanosine(2069) in 23S rRNA + S-adenosyl-L-methionine = N(2)-methylguanosine(2069) in 23S rRNA + S-adenosyl-L-homocysteine + H(+). Its function is as follows. Specifically methylates the guanine in position 2445 (m2G2445) and the guanine in position 2069 (m7G2069) of 23S rRNA. This Xanthomonas campestris pv. campestris (strain 8004) protein is Ribosomal RNA large subunit methyltransferase K/L.